The sequence spans 373 residues: tRNA/tmRNA (uracil-C(5))-methyltransferase (373 aa).

The S-adenosyl-L-methionine site is built by Gln190, Tyr219, Asn224, Glu240, and Asp300. The active-site Nucleophile is Cys325. The Proton acceptor role is filled by Glu359.

This sequence belongs to the class I-like SAM-binding methyltransferase superfamily. RNA M5U methyltransferase family. TrmA subfamily.

The catalysed reaction is uridine(54) in tRNA + S-adenosyl-L-methionine = 5-methyluridine(54) in tRNA + S-adenosyl-L-homocysteine + H(+). The enzyme catalyses uridine(341) in tmRNA + S-adenosyl-L-methionine = 5-methyluridine(341) in tmRNA + S-adenosyl-L-homocysteine + H(+). In terms of biological role, dual-specificity methyltransferase that catalyzes the formation of 5-methyluridine at position 54 (m5U54) in all tRNAs, and that of position 341 (m5U341) in tmRNA (transfer-mRNA). The sequence is that of tRNA/tmRNA (uracil-C(5))-methyltransferase from Chromohalobacter salexigens (strain ATCC BAA-138 / DSM 3043 / CIP 106854 / NCIMB 13768 / 1H11).